A 388-amino-acid chain; its full sequence is LL-diaminopimelate aminotransferase (388 aa).

Substrate is bound by residues Y16 and G41. Pyridoxal 5'-phosphate is bound by residues Y70, 104–105 (SK), Y129, N179, Y210, and 239–241 (SLS). 3 residues coordinate substrate: K105, Y129, and N179. The residue at position 242 (K242) is an N6-(pyridoxal phosphate)lysine. R250 is a binding site for pyridoxal 5'-phosphate. R368 provides a ligand contact to substrate.

Belongs to the class-I pyridoxal-phosphate-dependent aminotransferase family. LL-diaminopimelate aminotransferase subfamily. As to quaternary structure, homodimer. The cofactor is pyridoxal 5'-phosphate.

It catalyses the reaction (2S,6S)-2,6-diaminopimelate + 2-oxoglutarate = (S)-2,3,4,5-tetrahydrodipicolinate + L-glutamate + H2O + H(+). Its pathway is amino-acid biosynthesis; L-lysine biosynthesis via DAP pathway; LL-2,6-diaminopimelate from (S)-tetrahydrodipicolinate (aminotransferase route): step 1/1. Functionally, involved in the synthesis of meso-diaminopimelate (m-DAP or DL-DAP), required for both lysine and peptidoglycan biosynthesis. Catalyzes the direct conversion of tetrahydrodipicolinate to LL-diaminopimelate. The polypeptide is LL-diaminopimelate aminotransferase (Nitratidesulfovibrio vulgaris (strain ATCC 29579 / DSM 644 / CCUG 34227 / NCIMB 8303 / VKM B-1760 / Hildenborough) (Desulfovibrio vulgaris)).